Here is a 263-residue protein sequence, read N- to C-terminus: Protein M1425_2021 (263 aa).

This sequence belongs to the CinA family.

The sequence is that of Protein M1425_2021 from Saccharolobus islandicus (strain M.14.25 / Kamchatka #1) (Sulfolobus islandicus).